Reading from the N-terminus, the 528-residue chain is Apolipoprotein N-acyltransferase (528 aa).

The next 5 membrane-spanning stretches (helical) occupy residues 8–28, 69–89, 99–119, 178–198, and 203–223; these read IMLLAGWRRALLAIASGAVGA, AFWIGWLFGFGYFVAGLWWLG, FAWALPLAVLGLPAVLAVFYG, VLGLFGVSALAVFVFAAPALL, and GAKLGLALAGILFCGHLGYGA. A CN hydrolase domain is found at 241-490; sequence VQPNIDQAAK…EGVENATFTL (250 aa). The active-site Proton acceptor is glutamate 285. Lysine 349 is a catalytic residue. Residue cysteine 402 is the Nucleophile of the active site.

The protein belongs to the CN hydrolase family. Apolipoprotein N-acyltransferase subfamily.

The protein resides in the cell inner membrane. It catalyses the reaction N-terminal S-1,2-diacyl-sn-glyceryl-L-cysteinyl-[lipoprotein] + a glycerophospholipid = N-acyl-S-1,2-diacyl-sn-glyceryl-L-cysteinyl-[lipoprotein] + a 2-acyl-sn-glycero-3-phospholipid + H(+). It functions in the pathway protein modification; lipoprotein biosynthesis (N-acyl transfer). Functionally, catalyzes the phospholipid dependent N-acylation of the N-terminal cysteine of apolipoprotein, the last step in lipoprotein maturation. This chain is Apolipoprotein N-acyltransferase, found in Allorhizobium ampelinum (strain ATCC BAA-846 / DSM 112012 / S4) (Agrobacterium vitis (strain S4)).